Consider the following 689-residue polypeptide: Glycine--tRNA ligase beta subunit (689 aa).

It belongs to the class-II aminoacyl-tRNA synthetase family. In terms of assembly, tetramer of two alpha and two beta subunits.

It is found in the cytoplasm. It catalyses the reaction tRNA(Gly) + glycine + ATP = glycyl-tRNA(Gly) + AMP + diphosphate. In Acinetobacter baylyi (strain ATCC 33305 / BD413 / ADP1), this protein is Glycine--tRNA ligase beta subunit.